We begin with the raw amino-acid sequence, 219 residues long: Segregation and condensation protein B (219 aa).

A disordered region spans residues 193-219; that stretch reads SLFAGGEEPSAEAADGGAGESTHGEEE. The span at 196-207 shows a compositional bias: low complexity; sequence AGGEEPSAEAAD.

The protein belongs to the ScpB family. Homodimer. Homodimerization may be required to stabilize the binding of ScpA to the Smc head domains. Component of a cohesin-like complex composed of ScpA, ScpB and the Smc homodimer, in which ScpA and ScpB bind to the head domain of Smc. The presence of the three proteins is required for the association of the complex with DNA.

It is found in the cytoplasm. Participates in chromosomal partition during cell division. May act via the formation of a condensin-like complex containing Smc and ScpA that pull DNA away from mid-cell into both cell halves. The polypeptide is Segregation and condensation protein B (Symbiobacterium thermophilum (strain DSM 24528 / JCM 14929 / IAM 14863 / T)).